The chain runs to 396 residues: Elongation factor Tu (396 aa).

A tr-type G domain is found at 10-206 (KPHCNIGTIG…AVDAYIPQPE (197 aa)). The G1 stretch occupies residues 19–26 (GHVDHGKT). 19–26 (GHVDHGKT) lines the GTP pocket. T26 is a binding site for Mg(2+). The G2 stretch occupies residues 60–64 (GITIS). Residues 81 to 84 (DCPG) form a G3 region. Residues 81–85 (DCPGH) and 136–139 (NKCD) contribute to the GTP site. Positions 136–139 (NKCD) are G4. Residues 174–176 (SAL) form a G5 region.

It belongs to the TRAFAC class translation factor GTPase superfamily. Classic translation factor GTPase family. EF-Tu/EF-1A subfamily. In terms of assembly, monomer.

The protein localises to the cytoplasm. The catalysed reaction is GTP + H2O = GDP + phosphate + H(+). In terms of biological role, GTP hydrolase that promotes the GTP-dependent binding of aminoacyl-tRNA to the A-site of ribosomes during protein biosynthesis. This Rhodopseudomonas palustris (strain BisB18) protein is Elongation factor Tu.